The sequence spans 102 residues: Small ribosomal subunit protein bS18c (102 aa).

The segment covering 1–19 (MDKTKRPLRKSKRSFRRRL) has biased composition (basic residues). Residues 1–26 (MDKTKRPLRKSKRSFRRRLPPPIGSG) form a disordered region.

This sequence belongs to the bacterial ribosomal protein bS18 family. Part of the 30S ribosomal subunit.

Its subcellular location is the plastid. The protein resides in the chloroplast. This chain is Small ribosomal subunit protein bS18c, found in Piper cenocladum (Ant piper).